The primary structure comprises 625 residues: Endoglucanase 13 (625 aa).

The N-terminal stretch at 1–34 is a signal peptide; the sequence is MAATMNKTPATTFLLIPAAASLVLLLAAAASVEA. D91 (nucleophile) is an active-site residue. Residue H427 is part of the active site. N-linked (GlcNAc...) asparagine glycosylation is present at N440. Catalysis depends on residues D479 and E488. A disordered region spans residues 509–530; the sequence is ADNTPEYTPAPNAPSPSNGGSP.

Belongs to the glycosyl hydrolase 9 (cellulase E) family. In terms of tissue distribution, expressed in roots and flowers.

Its subcellular location is the secreted. It carries out the reaction Endohydrolysis of (1-&gt;4)-beta-D-glucosidic linkages in cellulose, lichenin and cereal beta-D-glucans.. The protein is Endoglucanase 13 (GLU6) of Oryza sativa subsp. japonica (Rice).